Here is a 415-residue protein sequence, read N- to C-terminus: Adenosylhomocysteinase (415 aa).

Substrate-binding residues include threonine 53, aspartate 124, and glutamate 147. 148–150 (TTT) contributes to the NAD(+) binding site. Lysine 177 and aspartate 181 together coordinate substrate. NAD(+)-binding positions include asparagine 182, 211–216 (GYGWVG), glutamate 234, asparagine 269, 290–292 (SGH), and asparagine 337.

It belongs to the adenosylhomocysteinase family. NAD(+) serves as cofactor.

The protein localises to the cytoplasm. It catalyses the reaction S-adenosyl-L-homocysteine + H2O = L-homocysteine + adenosine. It functions in the pathway amino-acid biosynthesis; L-homocysteine biosynthesis; L-homocysteine from S-adenosyl-L-homocysteine: step 1/1. May play a key role in the regulation of the intracellular concentration of adenosylhomocysteine. This chain is Adenosylhomocysteinase, found in Sulfurisphaera tokodaii (strain DSM 16993 / JCM 10545 / NBRC 100140 / 7) (Sulfolobus tokodaii).